Here is a 62-residue protein sequence, read N- to C-terminus: Large ribosomal subunit protein bL28 (62 aa).

Belongs to the bacterial ribosomal protein bL28 family.

This Thermoanaerobacter pseudethanolicus (strain ATCC 33223 / 39E) (Clostridium thermohydrosulfuricum) protein is Large ribosomal subunit protein bL28.